The primary structure comprises 37 residues: Large ribosomal subunit protein bL36c (37 aa).

The protein belongs to the bacterial ribosomal protein bL36 family.

The protein localises to the plastid. Its subcellular location is the chloroplast. The sequence is that of Large ribosomal subunit protein bL36c from Adiantum capillus-veneris (Maidenhair fern).